The sequence spans 67 residues: Prokaryotic ubiquitin-like protein Pup (67 aa).

The disordered stretch occupies residues 1 to 36 (MPQQFEQPQAQQAATQEDDALATTQAAAQTESADQA). An ARC ATPase binding region spans residues 23-61 (TTQAAAQTESADQADVLDDILDDIESTLETNAEEYVNSF). Glu67 participates in a covalent cross-link: Isoglutamyl lysine isopeptide (Glu-Lys) (interchain with K-? in acceptor proteins).

Belongs to the prokaryotic ubiquitin-like protein family. Strongly interacts with the proteasome-associated ATPase ARC through a hydrophobic interface; the interacting region of Pup lies in its C-terminal half. There is one Pup binding site per ARC hexamer ring.

It functions in the pathway protein degradation; proteasomal Pup-dependent pathway. In terms of biological role, protein modifier that is covalently attached to lysine residues of substrate proteins, thereby targeting them for proteasomal degradation. The tagging system is termed pupylation. The polypeptide is Prokaryotic ubiquitin-like protein Pup (Bifidobacterium longum (strain DJO10A)).